Here is a 255-residue protein sequence, read N- to C-terminus: Imidazole glycerol phosphate synthase subunit HisF (255 aa).

Residues Asp-12 and Asp-131 contribute to the active site.

The protein belongs to the HisA/HisF family. As to quaternary structure, heterodimer of HisH and HisF.

The protein localises to the cytoplasm. It carries out the reaction 5-[(5-phospho-1-deoxy-D-ribulos-1-ylimino)methylamino]-1-(5-phospho-beta-D-ribosyl)imidazole-4-carboxamide + L-glutamine = D-erythro-1-(imidazol-4-yl)glycerol 3-phosphate + 5-amino-1-(5-phospho-beta-D-ribosyl)imidazole-4-carboxamide + L-glutamate + H(+). The protein operates within amino-acid biosynthesis; L-histidine biosynthesis; L-histidine from 5-phospho-alpha-D-ribose 1-diphosphate: step 5/9. IGPS catalyzes the conversion of PRFAR and glutamine to IGP, AICAR and glutamate. The HisF subunit catalyzes the cyclization activity that produces IGP and AICAR from PRFAR using the ammonia provided by the HisH subunit. The sequence is that of Imidazole glycerol phosphate synthase subunit HisF from Ignicoccus hospitalis (strain KIN4/I / DSM 18386 / JCM 14125).